The following is a 286-amino-acid chain: General stress protein A (286 aa).

UDP is bound by residues 12–17 and 111–112; these read CADDNY and DC. Mn(2+) is bound by residues aspartate 111, aspartate 113, and histidine 247. 247–253 is a UDP binding site; that stretch reads HFCGGEK.

This sequence belongs to the glycosyltransferase 8 family.

This chain is General stress protein A (gspA), found in Bacillus subtilis (strain 168).